A 243-amino-acid polypeptide reads, in one-letter code: GTP cyclohydrolase 1 (243 aa).

Thr-15 bears the Phosphothreonine mark. A disordered region spans residues 18–55 (NIRPTSPYTLNPPVERDGFSWPSVGTRQRAEETEEEEK). At Ser-23 the chain carries Phosphoserine. Zn(2+) contacts are provided by Cys-132, His-135, and Cys-203.

Belongs to the GTP cyclohydrolase I family. In terms of assembly, homodimer.

The catalysed reaction is GTP + H2O = 7,8-dihydroneopterin 3'-triphosphate + formate + H(+). It functions in the pathway cofactor biosynthesis; 7,8-dihydroneopterin triphosphate biosynthesis; 7,8-dihydroneopterin triphosphate from GTP: step 1/1. Its function is as follows. GTP cyclohydrolase 1 is the first enzyme in the biosynthetic pathway leading to folic acid. In Saccharomyces cerevisiae (strain ATCC 204508 / S288c) (Baker's yeast), this protein is GTP cyclohydrolase 1.